A 413-amino-acid polypeptide reads, in one-letter code: Tryptophan synthase beta chain (413 aa).

N6-(pyridoxal phosphate)lysine is present on Lys107.

This sequence belongs to the TrpB family. Tetramer of two alpha and two beta chains. Requires pyridoxal 5'-phosphate as cofactor.

The catalysed reaction is (1S,2R)-1-C-(indol-3-yl)glycerol 3-phosphate + L-serine = D-glyceraldehyde 3-phosphate + L-tryptophan + H2O. Its pathway is amino-acid biosynthesis; L-tryptophan biosynthesis; L-tryptophan from chorismate: step 5/5. In terms of biological role, the beta subunit is responsible for the synthesis of L-tryptophan from indole and L-serine. The polypeptide is Tryptophan synthase beta chain (Trichormus variabilis (strain ATCC 29413 / PCC 7937) (Anabaena variabilis)).